We begin with the raw amino-acid sequence, 116 residues long: Flagellar transcriptional regulator FlhD (116 aa).

This sequence belongs to the FlhD family. Homodimer; disulfide-linked. Forms a heterohexamer composed of two FlhC and four FlhD subunits. Each FlhC binds a FlhD dimer, forming a heterotrimer, and a hexamer assembles by dimerization of two heterotrimers.

The protein resides in the cytoplasm. Functionally, functions in complex with FlhC as a master transcriptional regulator that regulates transcription of several flagellar and non-flagellar operons by binding to their promoter region. Activates expression of class 2 flagellar genes, including fliA, which is a flagellum-specific sigma factor that turns on the class 3 genes. Also regulates genes whose products function in a variety of physiological pathways. The chain is Flagellar transcriptional regulator FlhD from Escherichia coli O9:H4 (strain HS).